Reading from the N-terminus, the 122-residue chain is Large ribosomal subunit protein bL12 (122 aa).

The protein belongs to the bacterial ribosomal protein bL12 family. As to quaternary structure, homodimer. Part of the ribosomal stalk of the 50S ribosomal subunit. Forms a multimeric L10(L12)X complex, where L10 forms an elongated spine to which 2 to 4 L12 dimers bind in a sequential fashion. Binds GTP-bound translation factors.

In terms of biological role, forms part of the ribosomal stalk which helps the ribosome interact with GTP-bound translation factors. Is thus essential for accurate translation. The sequence is that of Large ribosomal subunit protein bL12 from Actinobacillus pleuropneumoniae serotype 5b (strain L20).